The sequence spans 230 residues: Ribose-5-phosphate isomerase A (230 aa).

Substrate is bound by residues 29 to 32, 85 to 88, and 98 to 101; these read TGST, DGAD, and KGGG. Glu-107 functions as the Proton acceptor in the catalytic mechanism. Lys-125 lines the substrate pocket.

The protein belongs to the ribose 5-phosphate isomerase family. As to quaternary structure, homodimer.

The catalysed reaction is aldehydo-D-ribose 5-phosphate = D-ribulose 5-phosphate. It participates in carbohydrate degradation; pentose phosphate pathway; D-ribose 5-phosphate from D-ribulose 5-phosphate (non-oxidative stage): step 1/1. Catalyzes the reversible conversion of ribose-5-phosphate to ribulose 5-phosphate. This chain is Ribose-5-phosphate isomerase A, found in Staphylococcus haemolyticus (strain JCSC1435).